The chain runs to 868 residues: Probable mixed-linked glucan synthase 3 (868 aa).

The disordered stretch occupies residues 36–68 (ERKAAGGGGGGAKGKHWAAADKGERRAAKECGG). Positions 53–68 (AAADKGERRAAKECGG) are enriched in basic and acidic residues. 2 helical membrane passes run 86–106 (LLHPYRALIFARLIAVLLFFG) and 116–136 (IMWFWTMSVAGDVWFGFSWLL). The active site involves Asp-211. Asp-412 and Asp-414 together coordinate substrate. Asp-573 is a catalytic residue. 6 consecutive transmembrane segments (helical) span residues 649 to 669 (IYPVTSLFILLYAISPVMWLI), 686 to 706 (LLVIILMIHMIGWLEIKWAGI), 717 to 737 (FFMIGSTSAYPTAVLHMVVNL), 771 to 791 (MLIPTMVVLVANIGAIGVAIG), 810 to 830 (MGLLFNMWVMFLLYPFALAIM), and 838 to 858 (IILVVLLPIIFVIVALVYVAT).

It belongs to the glycosyltransferase 2 family. Plant cellulose synthase-like F subfamily.

It localises to the golgi apparatus membrane. Its function is as follows. May catalyze both beta-1,3 and beta-1,4 glycosidic linkage on beta-D-glucan. Essential for (1,3;1,4)-beta-D-glucans synthesis in grasses and cereals (Poaceae). The mixed-linked glucans (which are not present in walls of dicotyledons or most other monocotyledonous plants) are particularly important constituents of the walls of the starchy endosperm and aleurone cells of cereal grains such as oats, wheat, rice and barley. They can account for up to 70% by weight of the wall. In Oryza sativa subsp. japonica (Rice), this protein is Probable mixed-linked glucan synthase 3 (CSLF3).